A 186-amino-acid chain; its full sequence is Tumor necrosis factor alpha-induced protein 8-like protein 1 (186 aa).

Positions 37 to 70 form a coiled coil; sequence EVLDELYRVTKEYTRNRKEAQKIIKNLIKMVVKL.

This sequence belongs to the TNFAIP8 family.

The protein localises to the cytoplasm. In Danio rerio (Zebrafish), this protein is Tumor necrosis factor alpha-induced protein 8-like protein 1 (tnfaip8l1).